We begin with the raw amino-acid sequence, 204 residues long: ATP synthase subunit b 2 (204 aa).

The tract at residues 8-28 (AQSSTTEGAEAHDAAAAGEVH) is disordered. Residues 56-76 (LLWLAITFGLFYLLMSKVIIP) traverse the membrane as a helical segment.

This sequence belongs to the ATPase B chain family. As to quaternary structure, F-type ATPases have 2 components, F(1) - the catalytic core - and F(0) - the membrane proton channel. F(1) has five subunits: alpha(3), beta(3), gamma(1), delta(1), epsilon(1). F(0) has three main subunits: a(1), b(2) and c(10-14). The alpha and beta chains form an alternating ring which encloses part of the gamma chain. F(1) is attached to F(0) by a central stalk formed by the gamma and epsilon chains, while a peripheral stalk is formed by the delta and b chains.

The protein resides in the cell inner membrane. Functionally, f(1)F(0) ATP synthase produces ATP from ADP in the presence of a proton or sodium gradient. F-type ATPases consist of two structural domains, F(1) containing the extramembraneous catalytic core and F(0) containing the membrane proton channel, linked together by a central stalk and a peripheral stalk. During catalysis, ATP synthesis in the catalytic domain of F(1) is coupled via a rotary mechanism of the central stalk subunits to proton translocation. Its function is as follows. Component of the F(0) channel, it forms part of the peripheral stalk, linking F(1) to F(0). The b'-subunit is a diverged and duplicated form of b found in plants and photosynthetic bacteria. This chain is ATP synthase subunit b 2 (atpF2), found in Rhizobium meliloti (strain 1021) (Ensifer meliloti).